A 146-amino-acid chain; its full sequence is Large ribosomal subunit protein uL15 (146 aa).

Residues 1–54 form a disordered region; the sequence is MKLHELQPAAGSRKAPKRVGRGTGSGLGRNAGKGEKGQNARSGGGVRPGFEGGQ. 2 stretches are compositionally biased toward gly residues: residues 21-31 and 42-52; these read RGTGSGLGRNA and SGGGVRPGFEG.

This sequence belongs to the universal ribosomal protein uL15 family. In terms of assembly, part of the 50S ribosomal subunit.

Functionally, binds to the 23S rRNA. The sequence is that of Large ribosomal subunit protein uL15 from Clostridium botulinum (strain Alaska E43 / Type E3).